Here is a 255-residue protein sequence, read N- to C-terminus: 5'-nucleotidase SurE (255 aa).

Residues Asp-8, Asp-9, Ser-40, and Asn-93 each coordinate a divalent metal cation.

This sequence belongs to the SurE nucleotidase family. The cofactor is a divalent metal cation.

The protein localises to the cytoplasm. The enzyme catalyses a ribonucleoside 5'-phosphate + H2O = a ribonucleoside + phosphate. In terms of biological role, nucleotidase that shows phosphatase activity on nucleoside 5'-monophosphates. The polypeptide is 5'-nucleotidase SurE (Rhodopseudomonas palustris (strain BisA53)).